We begin with the raw amino-acid sequence, 600 residues long: Na(+)/dicarboxylate cotransporter 3 (600 aa).

Over 1–16 (MAALAALAKKVWSARR) the chain is Cytoplasmic. The chain crosses the membrane as a helical span at residues 17–37 (LLVLLLVPLALLPILFALPPK). The Extracellular portion of the chain corresponds to 38–55 (EGRCLYVILLMAVYWCTE). A helical membrane pass occupies residues 56–76 (ALPLSVTALLPIILFPFMGIL). The Cytoplasmic segment spans residues 77-82 (PSSKVC). Residues 83-103 (PQYFLDTNFLFLSGLIMASAI) form a helical membrane-spanning segment. Over 104-137 (EEWNLHRRIALKVLMLVGVQPARLILGMMVTTSF) the chain is Extracellular. The chain crosses the membrane as a helical span at residues 138–158 (LSMWLSNTASTAMMLPIASAI). The Cytoplasmic portion of the chain corresponds to 159–229 (LKSLFGQREA…KEEEHRRNIW (71 aa)). A helical membrane pass occupies residues 230-250 (KGFLISIPYSASIGGTATLTG). Residues 251-278 (TAPNLILLGQLKSFFPQCDVVNFGSWFI) lie on the Extracellular side of the membrane. A helical membrane pass occupies residues 279-299 (FAFPLMLLFLLVGWLWISFLY). The Cytoplasmic segment spans residues 300–336 (GGMSWRSWRKKKSKIRADAEDQAKAVIQEEFQNLGPI). The helical transmembrane segment at 337 to 357 (KFAEQAVFILFCTFAILLFSR) threads the bilayer. The Extracellular portion of the chain corresponds to 358–372 (DPKFIPGWASLFAPG). A helical membrane pass occupies residues 373–393 (FVSDAVTGVAIVTILFFFPSQ). Residues 394-422 (KPSLKWWFDFKAPNSETEPLLSWKKAQET) are Cytoplasmic-facing. Positions 423 to 443 (VPWNIILLLGGGFAMAKGCEE) form an intramembrane region, helical. The Cytoplasmic portion of the chain corresponds to 444-461 (SGLSAWIGGQLHPLEHVP). A helical transmembrane segment spans residues 462-482 (PLLAVLLITVVIAFFTEFASN). The Extracellular segment spans residues 483-505 (TATIIIFLPVLAELAIRLHVHPL). Residues 506–526 (YLMIPGTVGCSYAFMLPVSTP) traverse the membrane as a helical segment. Residues 527–546 (PNSIAFSTGHLLVKDMVRTG) lie on the Cytoplasmic side of the membrane. Residues 547–567 (LLMNLMGVLLLSLAMNTWAQT) traverse the membrane as a helical segment. Topologically, residues 568 to 600 (IFQLGTFPDWANTHAANATALPPALTNNTVQTF) are extracellular. Asparagine 584 and asparagine 594 each carry an N-linked (GlcNAc...) asparagine glycan.

It belongs to the SLC13A/DASS transporter (TC 2.A.47) family. NADC subfamily. As to expression, highly expressed in kidney, and at much lower levels in brain.

The protein resides in the cell membrane. It catalyses the reaction succinate(out) + 3 Na(+)(out) = succinate(in) + 3 Na(+)(in). The catalysed reaction is 2-oxoglutarate(out) + 3 Na(+)(out) = 2-oxoglutarate(in) + 3 Na(+)(in). It carries out the reaction N-acetyl-L-aspartate(out) + 3 Na(+)(out) = N-acetyl-L-aspartate(in) + 3 Na(+)(in). The enzyme catalyses fumarate(out) + 3 Na(+)(out) = fumarate(in) + 3 Na(+)(in). It catalyses the reaction glutarate(out) + 3 Na(+)(out) = glutarate(in) + 3 Na(+)(in). The catalysed reaction is 2,2-dimethylsuccinate(out) + 3 Na(+)(out) = 2,2-dimethylsuccinate(in) + 3 Na(+)(in). It carries out the reaction 2,3-dimethylsuccinate(out) + 3 Na(+)(out) = 2,3-dimethylsuccinate(in) + 3 Na(+)(in). The enzyme catalyses malate(out) + 3 Na(+)(out) = malate(in) + 3 Na(+)(in). It catalyses the reaction itaconate(out) + 3 Na(+)(out) = itaconate(in) + 3 Na(+)(in). Functionally, high-affinity sodium-dicarboxylate cotransporter that accepts a range of substrates with 4-6 carbon atoms, such as the citric acid cycle intermediates succinate and alpha-ketoglutarate (2-oxoglutarate), as well as other compounds including N-acetyl-L-aspartate. Transports the dicarboxylate into the cell with a probable stoichiometry of 3 Na(+) for 1 divalent dicarboxylate, rendering the process electrogenic. Can transport citrate in a Na(+)-dependent manner, recognizing the divalent form of citrate rather than the trivalent form which is normally found in blood. Imports itaconate in hepatocytes leading to activation of TFEB-dependent lysosomal biogenesis involved in antibacterial innate immune response. The polypeptide is Na(+)/dicarboxylate cotransporter 3 (Slc13a3) (Mus musculus (Mouse)).